The primary structure comprises 708 residues: Exocyst complex component 8 (708 aa).

One can recognise a PH domain in the interval 168-268; that stretch reads YLVYNGDLLE…WLEVLEETKR (101 aa). Over residues 271 to 282 the composition is skewed to basic and acidic residues; sequence ALSEKRRLEQEA. The tract at residues 271–314 is disordered; it reads ALSEKRRLEQEALPRPAPTPPESTNPFEEEEEEEEEPSAEEEAV. Positions 297–314 are enriched in acidic residues; the sequence is FEEEEEEEEEPSAEEEAV.

It belongs to the EXO84 family. The exocyst complex is composed of EXOC1, EXOC2, EXOC3, EXOC4, EXOC5, EXOC6, EXOC7 and EXOC8.

The protein resides in the cytoplasm. It localises to the perinuclear region. Its subcellular location is the cell projection. The protein localises to the growth cone. Its function is as follows. Component of the exocyst complex involved in the docking of exocytic vesicles with fusion sites on the plasma membrane. This is Exocyst complex component 8 (EXOC8) from Gallus gallus (Chicken).